A 188-amino-acid polypeptide reads, in one-letter code: Elongation factor P (188 aa).

It belongs to the elongation factor P family.

It is found in the cytoplasm. Its pathway is protein biosynthesis; polypeptide chain elongation. Involved in peptide bond synthesis. Stimulates efficient translation and peptide-bond synthesis on native or reconstituted 70S ribosomes in vitro. Probably functions indirectly by altering the affinity of the ribosome for aminoacyl-tRNA, thus increasing their reactivity as acceptors for peptidyl transferase. The protein is Elongation factor P of Gluconacetobacter diazotrophicus (strain ATCC 49037 / DSM 5601 / CCUG 37298 / CIP 103539 / LMG 7603 / PAl5).